A 398-amino-acid chain; its full sequence is Inner membrane protein YjgN (398 aa).

Topologically, residues 1-24 (MAQVINEMDVPSHSFVFHGTGERY) are cytoplasmic. The helical transmembrane segment at 25 to 45 (FLICVVNVLLTIITLGIYLPW) threads the bilayer. Residues 46 to 73 (ALMKCKRYLYANMEVNGQRFSYGITGGN) are Periplasmic-facing. Residues 74 to 94 (VFFSCLVFVFFYFAILMTVSA) traverse the membrane as a helical segment. D95 is a topological domain (cytoplasmic). A helical membrane pass occupies residues 96–116 (MPLIGCVLTLSLLVLLIFMAA). Topologically, residues 117–142 (KGLRYQALMTSLNGVRFSFNCSMKGV) are periplasmic. The helical transmembrane segment at 143–163 (WWVTFFLPILMAIGMGTVFFI) threads the bilayer. Over 164 to 175 (STKMLHANSSSS) the chain is Cytoplasmic. A helical transmembrane segment spans residues 176-196 (VIVSVVLMAIVGIVSIGIFNG). Over 197–228 (TLYSLVMSFLWSNTSFGIHRFKVKLDTAYCIK) the chain is Periplasmic. The helical transmembrane segment at 229–249 (YAILAFLALLPFLAVAGYIIF) threads the bilayer. Over 250-278 (DQILNAYDSSVYANDDIENLQQFMEMQRK) the chain is Cytoplasmic. A helical membrane pass occupies residues 279-299 (MIIAQLIYYFGIAVSTSYLTV). The Periplasmic segment spans residues 300–333 (SLRNHFMSNLSLNDGRIRFRSTLTYHGMLYRMCA). The chain crosses the membrane as a helical span at residues 334–354 (LVVISGITGGLAYPLLKIWMI). Residues 355 to 398 (DWQAKNTYLLGDLDDLPLINKEEQPDKGFLASISRGIMPSLPFL) are Cytoplasmic-facing.

The protein resides in the cell inner membrane. The sequence is that of Inner membrane protein YjgN (yjgN) from Escherichia coli O157:H7.